Reading from the N-terminus, the 239-residue chain is Ribosome assembly factor mrt4 (239 aa).

This sequence belongs to the universal ribosomal protein uL10 family. In terms of assembly, associates with the pre-60S ribosomal particle.

The protein localises to the nucleus. The protein resides in the nucleolus. It localises to the cytoplasm. Component of the ribosome assembly machinery. Nuclear paralog of the ribosomal protein P0, it binds pre-60S subunits at an early stage of assembly in the nucleolus, and is replaced by P0 in cytoplasmic pre-60S subunits and mature 80S ribosomes. This Candida glabrata (strain ATCC 2001 / BCRC 20586 / JCM 3761 / NBRC 0622 / NRRL Y-65 / CBS 138) (Yeast) protein is Ribosome assembly factor mrt4.